Here is a 316-residue protein sequence, read N- to C-terminus: Lys-63-specific deubiquitinase BRCC36 (316 aa).

At Ala-2 the chain carries N-acetylalanine. The MPN domain occupies 12–179; the sequence is VHLESDAFLV…YTCFQSIQAQ (168 aa). 3 residues coordinate Zn(2+): His-122, His-124, and Asp-135. Residues 122-135 carry the JAMM motif motif; sequence HSHPHITVWPSHVD. Residue Ser-258 is modified to Phosphoserine.

The protein belongs to the peptidase M67A family. BRCC36 subfamily. In terms of assembly, component of the ARISC complex, at least composed of UIMC1/RAP80, ABRAXAS1, BRCC3/BRCC36, BABAM2 and BABAM1/NBA1. Component of the BRCA1-A complex, at least composed of BRCA1, BARD1, UIMC1/RAP80, ABRAXAS1, BRCC3/BRCC36, BABAM2 and BABAM1/NBA1. In the BRCA1-A complex, interacts directly with ABRAXAS1 and BABAM2. Component of the BRISC complex, at least composed of ABRAXAS2, BRCC3/BRCC36, BABAM2 and BABAM1/NBA1. Identified in a complex with SHMT2 and the other subunits of the BRISC complex. In the BRISC complex, interacts directly with ABRAXAS2. Identified in a complex with ABRAXAS2 and NUMA1. The BRISC complex interacts with the CSN complex. Component of the BRCA1/BRCA2 containing complex (BRCC), which also contains BRCA1, BRCA2, BARD1, BABAM2 and RAD51. BRCC is a ubiquitin E3 ligase complex that enhances cellular survival following DNA damage. Interacts with BRCA1. Binds polyubiquitin. Interacts with PWWP2B. Interacts with HDAC1; this interaction is enhanced in the presence of PWWP2B. Zn(2+) is required as a cofactor.

The protein resides in the nucleus. Its subcellular location is the cytoplasm. It is found in the cytoskeleton. It localises to the spindle pole. Metalloprotease that specifically cleaves 'Lys-63'-linked polyubiquitin chains. Does not have activity toward 'Lys-48'-linked polyubiquitin chains. Component of the BRCA1-A complex, a complex that specifically recognizes 'Lys-63'-linked ubiquitinated histones H2A and H2AX at DNA lesions sites, leading to target the BRCA1-BARD1 heterodimer to sites of DNA damage at double-strand breaks (DSBs). In the BRCA1-A complex, it specifically removes 'Lys-63'-linked ubiquitin on histones H2A and H2AX, antagonizing the RNF8-dependent ubiquitination at double-strand breaks (DSBs). Catalytic subunit of the BRISC complex, a multiprotein complex that specifically cleaves 'Lys-63'-linked ubiquitin in various substrates. Mediates the specific 'Lys-63'-specific deubiquitination associated with the COP9 signalosome complex (CSN), via the interaction of the BRISC complex with the CSN complex. The BRISC complex is required for normal mitotic spindle assembly and microtubule attachment to kinetochores via its role in deubiquitinating NUMA1. Plays a role in interferon signaling via its role in the deubiquitination of the interferon receptor IFNAR1; deubiquitination increases IFNAR1 activity by enhancing its stability and cell surface expression. Acts as a regulator of the NLRP3 inflammasome by mediating deubiquitination of NLRP3, leading to NLRP3 inflammasome assembly. Down-regulates the response to bacterial lipopolysaccharide (LPS) via its role in IFNAR1 deubiquitination. Deubiquitinates HDAC1 and PWWP2B leading to their stabilization. This Bos taurus (Bovine) protein is Lys-63-specific deubiquitinase BRCC36 (BRCC3).